Here is a 361-residue protein sequence, read N- to C-terminus: L-threonine 3-dehydrogenase (361 aa).

Cys38 contacts Zn(2+). Catalysis depends on charge relay system residues Thr40 and His43. Zn(2+)-binding residues include His63, Glu64, Cys93, Cys96, Cys99, and Cys107. Residues Ile175, Asp195, Arg200, 262 to 264 (LGI), and 286 to 287 (IY) each bind NAD(+).

This sequence belongs to the zinc-containing alcohol dehydrogenase family. As to quaternary structure, homotetramer. Requires Zn(2+) as cofactor.

It is found in the cytoplasm. The catalysed reaction is L-threonine + NAD(+) = (2S)-2-amino-3-oxobutanoate + NADH + H(+). It functions in the pathway amino-acid degradation; L-threonine degradation via oxydo-reductase pathway; glycine from L-threonine: step 1/2. Functionally, catalyzes the NAD(+)-dependent oxidation of L-threonine to 2-amino-3-ketobutyrate. The chain is L-threonine 3-dehydrogenase from Pectobacterium atrosepticum (strain SCRI 1043 / ATCC BAA-672) (Erwinia carotovora subsp. atroseptica).